A 188-amino-acid polypeptide reads, in one-letter code: Adrenodoxin, mitochondrial (188 aa).

The N-terminal 64 residues, 1-64 (MAAAPGARLL…RPLSVSARAR (64 aa)), are a transit peptide targeting the mitochondrion. Position 67 is a phosphoserine (S67). One can recognise a 2Fe-2S ferredoxin-type domain in the interval 69–175 (DKITVHFKNR…NMTVRVPEAV (107 aa)). The residue at position 70 (K70) is an N6-acetyllysine; alternate. An N6-succinyllysine; alternate modification is found at K70. Residues C110, C116, C119, and C156 each contribute to the [2Fe-2S] cluster site. K162 carries the post-translational modification N6-succinyllysine. S181 is modified (phosphoserine).

Belongs to the adrenodoxin/putidaredoxin family. Interacts with CYP11A1. The cofactor is [2Fe-2S] cluster.

The protein localises to the mitochondrion matrix. Its function is as follows. Essential for the synthesis of various steroid hormones, participates in the reduction of mitochondrial cytochrome P450 for steroidogenesis. Transfers electrons from adrenodoxin reductase to CYP11A1, a cytochrome P450 that catalyzes cholesterol side-chain cleavage. Does not form a ternary complex with adrenodoxin reductase and CYP11A1 but shuttles between the two enzymes to transfer electrons. This is Adrenodoxin, mitochondrial (Fdx1) from Mus musculus (Mouse).